A 417-amino-acid chain; its full sequence is Laccase-like protein claX (417 aa).

This sequence belongs to the multicopper oxidase family.

Its function is as follows. Laccase-like protein; part of the gene cluster that mediates the biosynthesis of clavilactone A, a meroterpenoid that features a unique benzo-fused ten-membered carbocyclic ring unit with an alpha,beta-epoxy-gamma-lactone moiety, forming an intriguing 10/5/3 tricyclic nested skeleton. ClaR, ClaS and ClaT are sufficient to produce clavilactone A and the function of claX, if any, has still to be identified. The biosynthesis begins with the prenyltransferase claS that transfers geranyl pyrophosphate (GPP) to hydroquinone to produces geranylhydroquinon. The cytochrome P450 monooxygenase claR then catalyzes the diradical coupling reaction between the intramolecular hydroquinone and allyl moieties to form the benzo-fused ten-membered carbocyclic ring unit of wigantol. Finally the cytochrome P450 monooxygenase claT exquisitely and stereoselectively assembles the alpha,beta-epoxy-gamma-lactone moiety, producing clavilactone A via arnebinol A. This chain is Laccase-like protein claX, found in Ampulloclitocybe clavipes (Club foot).